We begin with the raw amino-acid sequence, 527 residues long: uncharacterized protein (527 aa).

Disordered stretches follow at residues 1-49, 99-307, 319-353, and 382-419; these read MSSF…IKDE, DFNF…ATTT, TEIN…EDEN, and YINN…QQQE. Residues 8–17 show a composition bias toward acidic residues; that stretch reads YDDESEEEDN. Low complexity-rich tracts occupy residues 18 to 44 and 99 to 115; these read NNNN…NSNN and DFNF…NSNN. A compositionally biased stretch (basic and acidic residues) spans 141–150; the sequence is NEFRNPDLKN. Low complexity-rich tracts occupy residues 167–178 and 186–222; these read SSQNTTTTQQSS and NNNN…NSNN. Over residues 229 to 248 the composition is skewed to basic and acidic residues; the sequence is DDKSKKINENENTVNKKDNI. Over residues 283–296 the composition is skewed to basic residues; the sequence is LRKKLLKNQPKTKK. Composition is skewed to low complexity over residues 297–307 and 319–330; these read STTTTTTATTT and TEINNNNSNSNN. The span at 386–410 shows a compositional bias: acidic residues; the sequence is DDGDDDDDDDENENENDSQPEEEYE.

This is an uncharacterized protein from Dictyostelium discoideum (Social amoeba).